Here is a 74-residue protein sequence, read N- to C-terminus: uncharacterized protein (74 aa).

This is an uncharacterized protein from Invertebrate iridescent virus 3 (IIV-3).